The sequence spans 305 residues: Homoserine O-acetyltransferase (305 aa).

Cys132 acts as the Acyl-thioester intermediate in catalysis. 2 residues coordinate substrate: Lys153 and Ser181. The active-site Proton acceptor is His221. Residue Glu223 is part of the active site. Residue Arg235 participates in substrate binding.

This sequence belongs to the MetA family.

It localises to the cytoplasm. It carries out the reaction L-homoserine + acetyl-CoA = O-acetyl-L-homoserine + CoA. It participates in amino-acid biosynthesis; L-methionine biosynthesis via de novo pathway; O-acetyl-L-homoserine from L-homoserine: step 1/1. Transfers an acetyl group from acetyl-CoA to L-homoserine, forming acetyl-L-homoserine. The sequence is that of Homoserine O-acetyltransferase from Leuconostoc mesenteroides subsp. mesenteroides (strain ATCC 8293 / DSM 20343 / BCRC 11652 / CCM 1803 / JCM 6124 / NCDO 523 / NBRC 100496 / NCIMB 8023 / NCTC 12954 / NRRL B-1118 / 37Y).